A 76-amino-acid chain; its full sequence is uncharacterized protein (76 aa).

The chain crosses the membrane as a helical span at residues 24 to 44 (GAIFLVCYPLYCVVCFVSVLC).

It localises to the membrane. This is an uncharacterized protein from Schizosaccharomyces pombe (strain 972 / ATCC 24843) (Fission yeast).